The chain runs to 295 residues: Bis(5'-nucleosyl)-tetraphosphatase, symmetrical (295 aa).

The interval 271-295 (LSIEHPRHTHTPRRKAKKRHKRSPK) is disordered. The span at 277–295 (RHTHTPRRKAKKRHKRSPK) shows a compositional bias: basic residues.

This sequence belongs to the Ap4A hydrolase family.

The enzyme catalyses P(1),P(4)-bis(5'-adenosyl) tetraphosphate + H2O = 2 ADP + 2 H(+). Functionally, hydrolyzes diadenosine 5',5'''-P1,P4-tetraphosphate to yield ADP. This Xylella fastidiosa (strain M23) protein is Bis(5'-nucleosyl)-tetraphosphatase, symmetrical.